Reading from the N-terminus, the 924-residue chain is Periplasmic nitrate reductase (924 aa).

A signal peptide (tat-type signal) is located at residues 1-30; that stretch reads MNRRDFIKNTAIASAASVAGLSVPSSMLGA. One can recognise a 4Fe-4S Mo/W bis-MGD-type domain in the interval 35-91; the sequence is WKWDKAVCRFCGTGCGIMIARKDGKIVATKGDPAAPVNRGLNCIKGYFNAKIMYGED. [4Fe-4S] cluster is bound by residues Cys42, Cys45, Cys49, and Cys77. Residues Lys79, Gln147, Asn172, Cys176, 209–216, Met417, Gln421, Asn527, 552–553, Lys575, Asp602, and 814–823 contribute to the Mo-bis(molybdopterin guanine dinucleotide) site; these read WGANMAEM, SD, and TGRVLEHWHS. A substrate-binding site is contributed by Trp890. Positions 898 and 915 each coordinate Mo-bis(molybdopterin guanine dinucleotide).

This sequence belongs to the prokaryotic molybdopterin-containing oxidoreductase family. NasA/NapA/NarB subfamily. Component of the periplasmic nitrate reductase NapAB complex composed of NapA and NapB. [4Fe-4S] cluster serves as cofactor. Mo-bis(molybdopterin guanine dinucleotide) is required as a cofactor. Post-translationally, predicted to be exported by the Tat system. The position of the signal peptide cleavage has not been experimentally proven.

It is found in the periplasm. The catalysed reaction is 2 Fe(II)-[cytochrome] + nitrate + 2 H(+) = 2 Fe(III)-[cytochrome] + nitrite + H2O. Its function is as follows. Catalytic subunit of the periplasmic nitrate reductase complex NapAB. Receives electrons from NapB and catalyzes the reduction of nitrate to nitrite. The polypeptide is Periplasmic nitrate reductase (Campylobacter jejuni subsp. jejuni serotype O:6 (strain 81116 / NCTC 11828)).